Reading from the N-terminus, the 495-residue chain is Pentatricopeptide repeat-containing protein PPR5 homolog, chloroplastic (495 aa).

The interval 1-24 (MLAYPTTSSPWPPRHHGAAAAPAA) is disordered. Residues 1-29 (MLAYPTTSSPWPPRHHGAAAAPAARRHMA) constitute a chloroplast transit peptide. PPR repeat units lie at residues 120-154 (DNGI…GCRP), 155-189 (DTSV…MKTI), 195-229 (NIVT…PVSP), 230-264 (DIYT…QCRP), 265-299 (DVIT…KEKP), 300-334 (THPT…GFKP), 335-365 (NYVT…LVSS), 370-404 (HLSS…GAVP), and 405-439 (SAST…GIVP). Residues 455-495 (DKKPRTVPSKNSASKPDVESANNSGTDTSSKPNLSVWQVAA) are disordered. Positions 462-495 (PSKNSASKPDVESANNSGTDTSSKPNLSVWQVAA) are enriched in polar residues.

Belongs to the PPR family. P subfamily.

The protein localises to the plastid. It localises to the chloroplast. Its function is as follows. Involved in the biogenesis of the plastid translation machinery by promoting the splicing of group II introns in chloroplasts. The chain is Pentatricopeptide repeat-containing protein PPR5 homolog, chloroplastic from Oryza sativa subsp. japonica (Rice).